The primary structure comprises 188 residues: Ribosome-recycling factor (188 aa).

It belongs to the RRF family.

The protein resides in the cytoplasm. Its function is as follows. Responsible for the release of ribosomes from messenger RNA at the termination of protein biosynthesis. May increase the efficiency of translation by recycling ribosomes from one round of translation to another. The protein is Ribosome-recycling factor of Gluconobacter oxydans (strain 621H) (Gluconobacter suboxydans).